Reading from the N-terminus, the 269-residue chain is MFLINGHKQESLAVSDRATQFGDGCFTTARVIDGKVSLLSAHIQRLQDACQRLMISCDFWPQLEQEMKTLAAEQQNGVLKVVISRGSGGRGYSTLNSGPATRILSVTAYPAHYDRLRNEGITLALSPVRLGRNPHLAGIKHLNRLEQVLIRSHLEQTNADEALVLDSEGWVTECCAANLFWRKGNVVYTPRLDQAGVNGIMRQFCIRLLAQSSYQLVEVQASLEESLQADEMVICNALMPVMPVCACGDVSFSSATLYEYLAPLCERPN.

K140 is modified (N6-(pyridoxal phosphate)lysine).

This sequence belongs to the class-IV pyridoxal-phosphate-dependent aminotransferase family. In terms of assembly, homodimer. Pyridoxal 5'-phosphate is required as a cofactor.

The enzyme catalyses 4-amino-4-deoxychorismate = 4-aminobenzoate + pyruvate + H(+). Its pathway is cofactor biosynthesis; tetrahydrofolate biosynthesis; 4-aminobenzoate from chorismate: step 2/2. In terms of biological role, involved in the biosynthesis of p-aminobenzoate (PABA), a precursor of tetrahydrofolate. Converts 4-amino-4-deoxychorismate into 4-aminobenzoate (PABA) and pyruvate. This is Aminodeoxychorismate lyase (pabC) from Escherichia coli (strain K12).